The primary structure comprises 55 residues: Large ribosomal subunit protein bL33 (55 aa).

This sequence belongs to the bacterial ribosomal protein bL33 family.

This chain is Large ribosomal subunit protein bL33, found in Aeromonas hydrophila subsp. hydrophila (strain ATCC 7966 / DSM 30187 / BCRC 13018 / CCUG 14551 / JCM 1027 / KCTC 2358 / NCIMB 9240 / NCTC 8049).